Here is a 195-residue protein sequence, read N- to C-terminus: Ras-related protein Rab-31 (195 aa).

Positions 16, 18, 19, 20, 21, 32, and 33 each coordinate GTP. Residue serine 20 coordinates Mg(2+). 2 consecutive short sequence motifs (switch) follow at residues 30–42 (HFDH…IGAS) and 63–79 (AGQE…YRGS). The residue at position 36 (serine 36) is a Phosphoserine. Positions 38, 64, 119, 122, 150, and 151 each coordinate GTP. Mg(2+) is bound at residue threonine 38. 2 S-geranylgeranyl cysteine lipidation sites follow: cysteine 194 and cysteine 195.

This sequence belongs to the small GTPase superfamily. Rab family. In terms of assembly, interacts with OCRL. Interacts with NGFR. Interacts (in GDP-bound form) with RIN3 and GAPVD1, which function as guanine exchange factors (GEF). Interacts (in GTP-bound form) with EEA1. Interacts with EGFR. Interacts (in GTP-bound form) with APPL2; interaction contributes to or enhances recruitment of APPL2 to the phagosomes; interaction enhances Fc-gamma receptor-mediated phagocytosis through PI3K/Akt signaling in macrophages. Mg(2+) serves as cofactor. As to expression, highest expression in placenta and brain with lower levels in heart and lung. Not detected in liver, skeletal muscle, kidney or pancreas.

Its subcellular location is the golgi apparatus. It localises to the trans-Golgi network. The protein localises to the trans-Golgi network membrane. It is found in the early endosome. The protein resides in the cytoplasmic vesicle. Its subcellular location is the phagosome. It localises to the phagosome membrane. The enzyme catalyses GTP + H2O = GDP + phosphate + H(+). Regulated by guanine nucleotide exchange factors (GEFs) including RIN3 and GAPVD1 which promote the exchange of bound GDP for free GTP. Regulated by GTPase activating proteins (GAPs) which increase the GTP hydrolysis activity. Inhibited by GDP dissociation inhibitors (GDIs) which prevent Rab-GDP dissociation. Its function is as follows. The small GTPases Rab are key regulators of intracellular membrane trafficking, from the formation of transport vesicles to their fusion with membranes. Rabs cycle between an inactive GDP-bound form and an active GTP-bound form that is able to recruit to membranes different set of downstream effectors directly responsible for vesicle formation, movement, tethering and fusion. Required for the integrity and for normal function of the Golgi apparatus and the trans-Golgi network. Plays a role in insulin-stimulated translocation of GLUT4 to the cell membrane. Plays a role in M6PR transport from the trans-Golgi network to endosomes. Plays a role in the internalization of EGFR from the cell membrane into endosomes. Plays a role in the maturation of phagosomes that engulf pathogens, such as S.aureus and M.tuberculosis. The polypeptide is Ras-related protein Rab-31 (Homo sapiens (Human)).